Reading from the N-terminus, the 181-residue chain is Methanesulfonate monooxygenase hydroxylase subunit beta (181 aa).

Belongs to the bacterial ring-hydroxylating dioxygenase beta subunit family. As to quaternary structure, the MSA monooxygenase system consists of 4 proteins: the 2 subunits of the hydroxylase component (MsmA and MsmB), a ferredoxin (MsmC) and a ferredoxin reductase (MsmD). The hydroxylase component consists of a 3 alpha (MsmA) and 3 beta (MsmB) subunits.

It localises to the cytoplasm. The enzyme catalyses methanesulfonate + NADH + O2 = sulfite + formaldehyde + NAD(+) + H2O. Its activity is regulated as follows. MSAMO is inhibited by metal chelators (such as bathophenanthroline, bathocuprione, neocuprione, alpha-alpha-dipyridil and sodium EDTA) and by sodium azide, sodium arsenate and potassium cyanide. In terms of biological role, methanesulfonate monooxygenase (MSAMO) mediates the primary degradation of methanesulfonic acid (MSA) to produce formaldehyd and inorganic sulfite by initial hydroxylation of the carbon atom prior to spontaneous cleavage of the unstable hydroxymethanesulfonic acid. MSAMO has a restricted substrate range that includes only the short-chain aliphatic sulfonates (methane- to butanesulfonate) and excludes all larger molecules, such as arylsulfonates and aromatic sulfonates. All MSAMO components are required for enzyme activity. In Methylosulfonomonas methylovora, this protein is Methanesulfonate monooxygenase hydroxylase subunit beta.